The primary structure comprises 359 residues: MPLSRLIINDFRNITTCDIQLSSGFNFVIGPNGSGKTSVLEAIYLLGHGRSFKSSLTGRIIRNDCDELFIHGRFTTPEQFELPIGINKQRDGTTEVKIGGESGQKLAQLAKVLPLQLIHPEGFELVTDGPKFRRAFIDWGVFHVEPAFYDAWSRVKRLTKQRNALLKTANSYRELSYWDLELAQLSEKIDQWRVDYINHISEATQQICQAFLPEYDIKLSYYRGWDRETPYAELLKKNFERDKQLGYTVGGPNKADLRIKVAGTPVEDVLSRGQLKLMVCALRLAQGQHLTEATGKQCIYLIDDFASELDSHRRQLLAQYLKQTKAQVFISSITAEQIADMHDDESKMFEIEHGKIAQG.

30–37 contacts ATP; it reads GPNGSGKT.

It belongs to the RecF family.

The protein resides in the cytoplasm. The RecF protein is involved in DNA metabolism; it is required for DNA replication and normal SOS inducibility. RecF binds preferentially to single-stranded, linear DNA. It also seems to bind ATP. The protein is DNA replication and repair protein RecF of Aliivibrio fischeri (strain ATCC 700601 / ES114) (Vibrio fischeri).